A 403-amino-acid polypeptide reads, in one-letter code: L-alanine/L-glutamate racemase (403 aa).

Pyridoxal 5'-phosphate-binding positions include 62–64, 92–93, and 209–211; these read YSN, GL, and AVT. Residue Lys212 is modified to N6-(pyridoxal phosphate)lysine.

It belongs to the trans-sulfuration enzymes family. In terms of assembly, homotetramer; dimer of active dimers. It depends on pyridoxal 5'-phosphate as a cofactor.

The catalysed reaction is L-alanine = D-alanine. It carries out the reaction L-glutamate = D-glutamate. It catalyses the reaction L,L-cystathionine + H2O = L-homocysteine + pyruvate + NH4(+). Its pathway is cell wall biogenesis; peptidoglycan biosynthesis. Catalyzes the racemization of L-alanine to D-alanine, and of L-glutamate to D-glutamate. The activity is low, but likely physiological since W.pipientis wMel lacks canonical alr and murI genes, while D-alanine and D-glutamate are essential components of peptidoglycan. Also displays a vestigial cystathionine beta-lyase (CBL) activity, cleaving cystathionine to homocysteine and pyruvate; however, this reaction seems not to be physiologically relevant since the only met gene in the genome of this obligately intracellular parasitic bacterium is metC, demonstrating that it is a methionine auxotroph. The protein is L-alanine/L-glutamate racemase of Wolbachia pipientis wMel.